The primary structure comprises 186 residues: Signal peptidase I P (186 aa).

The Cytoplasmic segment spans residues 1–15 (MTKEKVFKKKSSILE). A helical membrane pass occupies residues 16-35 (WGKAIVIAVILALLIRNFLF). The Extracellular segment spans residues 36–186 (EPYVVEGKSM…FPFSNMRKAK (151 aa)). Catalysis depends on residues serine 44 and lysine 86.

The protein belongs to the peptidase S26 family.

The protein resides in the cell membrane. The enzyme catalyses Cleavage of hydrophobic, N-terminal signal or leader sequences from secreted and periplasmic proteins.. The sequence is that of Signal peptidase I P (sipP) from Bacillus subtilis subsp. natto.